Reading from the N-terminus, the 185-residue chain is Cbp/p300-interacting transactivator 4 (185 aa).

Disordered regions lie at residues 15 to 64 and 95 to 130; these read PRPP…VAYG and YPGR…AHAL. Residues 103–125 show a composition bias toward pro residues; it reads PGAPGGPSGPQPAPGAPAPPLQP.

This sequence belongs to the CITED family. As to quaternary structure, interacts via its C-terminal region with the CH1 domain of CREBBP and EP300. Interacts with all TFAP2/AP-2 isoforms.

The protein localises to the nucleus. It is found in the cytoplasm. Its function is as follows. Acts as a transcriptional coactivator for TFAP2/AP-2. Enhances estrogen-dependent transactivation mediated by estrogen receptors. May function as an inhibitor of transactivation by HIF1A by disrupting HIF1A interaction with CREBBP. May be involved in regulation of gene expression during development and differentiation of blood cells, endothelial cells and mammary epithelial cells. This chain is Cbp/p300-interacting transactivator 4 (CITED4), found in Bos taurus (Bovine).